A 327-amino-acid chain; its full sequence is Quinone oxidoreductase 1 (327 aa).

NADP(+)-binding positions include 42–46 (FIDTY), Tyr130, 152–153 (GV), 173–177 (GTAQK), Tyr192, Ser216, 238–241 (FGNS), 264–266 (PSL), and Arg317.

The protein belongs to the zinc-containing alcohol dehydrogenase family. Quinone oxidoreductase subfamily. Homodimer.

The catalysed reaction is 2 a quinone + NADPH + H(+) = 2 a 1,4-benzosemiquinone + NADP(+). This is Quinone oxidoreductase 1 (qorA) from Escherichia coli (strain K12).